The following is an 886-amino-acid chain: Microsomal triacylglycerol transfer protein (886 aa).

The signal sequence occupies residues 1-27; sequence MENKNKKCLRTLLLLALFLGLLEDGKT. The Vitellogenin domain occupies 30–653; it reads IAPNSQQIFK…SQASSFKLGI (624 aa). Asn-358, Asn-484, Asn-502, and Asn-616 each carry an N-linked (GlcNAc...) asparagine glycan.

The protein resides in the endoplasmic reticulum. It localises to the golgi apparatus. It catalyses the reaction a 1,2-diacyl-sn-glycero-3-phosphocholine(in) = a 1,2-diacyl-sn-glycero-3-phosphocholine(out). The enzyme catalyses a 1,2-diacyl-sn-glycero-3-phosphoethanolamine(in) = a 1,2-diacyl-sn-glycero-3-phosphoethanolamine(out). Its function is as follows. Catalyzes the transport of phospholipids such as phosphatidylethanolamine (1,2-diacyl-sn-glycero-3-phosphoethanolamine) and phosphatidylcholine (1,2-diacyl-sn-glycero-3-phosphocholine) between membranes. Required for the assembly and secretion of plasma lipoproteins that contain apolipoprotein B. The sequence is that of Microsomal triacylglycerol transfer protein from Drosophila melanogaster (Fruit fly).